Reading from the N-terminus, the 266-residue chain is PDZ domain-containing protein 9 (266 aa).

Positions 27–109 (KVIQTKLTVG…GTVLQIKAYR (83 aa)) constitute a PDZ domain.

In Mus musculus (Mouse), this protein is PDZ domain-containing protein 9 (Pdzd9).